A 246-amino-acid chain; its full sequence is Proteasome subunit alpha type-6-B (246 aa).

This sequence belongs to the peptidase T1A family. As to quaternary structure, component of the 20S core complex of the 26S proteasome. The 26S proteasome is composed of a core protease (CP), known as the 20S proteasome, capped at one or both ends by the 19S regulatory particle (RP/PA700). The 20S proteasome core is composed of 28 subunits that are arranged in four stacked rings, resulting in a barrel-shaped structure. The two end rings are each formed by seven alpha subunits, and the two central rings are each formed by seven beta subunits. The catalytic chamber with the active sites is on the inside of the barrel.

It localises to the cytoplasm. The protein resides in the nucleus. Functionally, the proteasome is a multicatalytic proteinase complex which is characterized by its ability to cleave peptides with Arg, Phe, Tyr, Leu, and Glu adjacent to the leaving group at neutral or slightly basic pH. The proteasome has an ATP-dependent proteolytic activity. The chain is Proteasome subunit alpha type-6-B (PAA2) from Arabidopsis thaliana (Mouse-ear cress).